The chain runs to 186 residues: MASEDPSVSGVSGRYATALFELARDEKVVDAVTADLDKFKAMLADSPDLLRLVRSPVFGAEAQAKALGAVLDKAGITGISANFLKLLAANRRLFVVADVIRAYRALVAKFKGEATADVTVAETLGDKNLEALKAALKAVTGKDVTLNINVDPAIIGGLVVKLGSRMVDSSIRTKLNSIKHAMKEAG.

It belongs to the ATPase delta chain family. In terms of assembly, F-type ATPases have 2 components, F(1) - the catalytic core - and F(0) - the membrane proton channel. F(1) has five subunits: alpha(3), beta(3), gamma(1), delta(1), epsilon(1). CF(0) has four main subunits: a(1), b(1), b'(1) and c(10-14). The alpha and beta chains form an alternating ring which encloses part of the gamma chain. F(1) is attached to F(0) by a central stalk formed by the gamma and epsilon chains, while a peripheral stalk is formed by the delta, b and b' chains.

The protein resides in the cell inner membrane. In terms of biological role, f(1)F(0) ATP synthase produces ATP from ADP in the presence of a proton or sodium gradient. F-type ATPases consist of two structural domains, F(1) containing the extramembraneous catalytic core and F(0) containing the membrane proton channel, linked together by a central stalk and a peripheral stalk. During catalysis, ATP synthesis in the catalytic domain of F(1) is coupled via a rotary mechanism of the central stalk subunits to proton translocation. Its function is as follows. This protein is part of the stalk that links CF(0) to CF(1). It either transmits conformational changes from CF(0) to CF(1) or is implicated in proton conduction. The sequence is that of ATP synthase subunit delta from Rhodopseudomonas palustris (strain HaA2).